Here is a 659-residue protein sequence, read N- to C-terminus: Putative oxidoreductase AegA (659 aa).

5 4Fe-4S ferredoxin-type domains span residues arginine 3–cysteine 22, histidine 47–aspartate 77, aspartate 78–threonine 107, valine 114–aspartate 147, and aspartate 218–leucine 252. Positions 12, 15, 18, 22, 56, 59, 64, 68, 87, 90, 93, 97, 121, 124, 133, 137, 227, 230, 236, and 240 each coordinate [4Fe-4S] cluster.

It depends on [4Fe-4S] cluster as a cofactor.

Functionally, involved in formate-dependent uric acid degradation under microaerobic and anaerobic conditions. May reduce the enzymes necessary for uric acid degradation. This chain is Putative oxidoreductase AegA, found in Escherichia coli (strain K12).